We begin with the raw amino-acid sequence, 406 residues long: Coenzyme A biosynthesis bifunctional protein CoaBC (406 aa).

Positions 1–191 (MLNNRNVLLC…ETSAPLEGKH (191 aa)) are phosphopantothenoylcysteine decarboxylase. Catalysis depends on Cys157, which acts as the Proton donor. The tract at residues 192-406 (VVITAGPTRE…ALSKQTGERS (215 aa)) is phosphopantothenate--cysteine ligase. The CTP site is built by Asp281, Lys291, Phe325, Lys339, and Lys343.

This sequence in the N-terminal section; belongs to the HFCD (homo-oligomeric flavin containing Cys decarboxylase) superfamily. In the C-terminal section; belongs to the PPC synthetase family. The cofactor is Mg(2+). FMN is required as a cofactor.

The enzyme catalyses N-[(R)-4-phosphopantothenoyl]-L-cysteine + H(+) = (R)-4'-phosphopantetheine + CO2. It carries out the reaction (R)-4'-phosphopantothenate + L-cysteine + CTP = N-[(R)-4-phosphopantothenoyl]-L-cysteine + CMP + diphosphate + H(+). It functions in the pathway cofactor biosynthesis; coenzyme A biosynthesis; CoA from (R)-pantothenate: step 2/5. Its pathway is cofactor biosynthesis; coenzyme A biosynthesis; CoA from (R)-pantothenate: step 3/5. In terms of biological role, catalyzes two sequential steps in the biosynthesis of coenzyme A. In the first step cysteine is conjugated to 4'-phosphopantothenate to form 4-phosphopantothenoylcysteine. In the second step the latter compound is decarboxylated to form 4'-phosphopantotheine. This chain is Coenzyme A biosynthesis bifunctional protein CoaBC, found in Bacillus subtilis (strain 168).